A 198-amino-acid polypeptide reads, in one-letter code: Large ribosomal subunit protein bL25 (198 aa).

This sequence belongs to the bacterial ribosomal protein bL25 family. CTC subfamily. As to quaternary structure, part of the 50S ribosomal subunit; part of the 5S rRNA/L5/L18/L25 subcomplex. Contacts the 5S rRNA. Binds to the 5S rRNA independently of L5 and L18.

This is one of the proteins that binds to the 5S RNA in the ribosome where it forms part of the central protuberance. The polypeptide is Large ribosomal subunit protein bL25 (Gloeothece citriformis (strain PCC 7424) (Cyanothece sp. (strain PCC 7424))).